The sequence spans 209 residues: Glutathione S-transferase 1-1 (209 aa).

One can recognise a GST N-terminal domain in the interval 1–81 (MADFYYLPGS…YLVEKYGKTD (81 aa)). Glutathione is bound by residues 51–53 (HTI) and 65–67 (ESR). A GST C-terminal domain is found at 87 to 209 (CPKKRAVINQ…GCLEFKKYFE (123 aa)).

Belongs to the GST superfamily. Theta family. In terms of assembly, homodimer.

It catalyses the reaction RX + glutathione = an S-substituted glutathione + a halide anion + H(+). In terms of biological role, conjugation of reduced glutathione to a wide number of exogenous and endogenous hydrophobic electrophiles. The polypeptide is Glutathione S-transferase 1-1 (GstD1) (Drosophila yakuba (Fruit fly)).